A 350-amino-acid polypeptide reads, in one-letter code: Phosphoribosylformylglycinamidine cyclo-ligase (350 aa).

The protein belongs to the AIR synthase family.

It localises to the cytoplasm. The enzyme catalyses 2-formamido-N(1)-(5-O-phospho-beta-D-ribosyl)acetamidine + ATP = 5-amino-1-(5-phospho-beta-D-ribosyl)imidazole + ADP + phosphate + H(+). It participates in purine metabolism; IMP biosynthesis via de novo pathway; 5-amino-1-(5-phospho-D-ribosyl)imidazole from N(2)-formyl-N(1)-(5-phospho-D-ribosyl)glycinamide: step 2/2. The sequence is that of Phosphoribosylformylglycinamidine cyclo-ligase from Cupriavidus taiwanensis (strain DSM 17343 / BCRC 17206 / CCUG 44338 / CIP 107171 / LMG 19424 / R1) (Ralstonia taiwanensis (strain LMG 19424)).